The sequence spans 123 residues: Ribosome-binding factor A (123 aa).

Belongs to the RbfA family. Monomer. Binds 30S ribosomal subunits, but not 50S ribosomal subunits or 70S ribosomes.

The protein resides in the cytoplasm. Its function is as follows. One of several proteins that assist in the late maturation steps of the functional core of the 30S ribosomal subunit. Associates with free 30S ribosomal subunits (but not with 30S subunits that are part of 70S ribosomes or polysomes). Required for efficient processing of 16S rRNA. May interact with the 5'-terminal helix region of 16S rRNA. The protein is Ribosome-binding factor A of Cupriavidus taiwanensis (strain DSM 17343 / BCRC 17206 / CCUG 44338 / CIP 107171 / LMG 19424 / R1) (Ralstonia taiwanensis (strain LMG 19424)).